Consider the following 662-residue polypeptide: DNA ligase (662 aa).

NAD(+) contacts are provided by residues 34 to 38 (DYDYD), 83 to 84 (SI), and Glu-113. The active-site N6-AMP-lysine intermediate is the Lys-115. NAD(+) contacts are provided by Arg-136, Glu-172, Lys-286, and Lys-310. Residues Cys-404, Cys-407, Cys-422, and Cys-427 each coordinate Zn(2+). Residues 583–662 (RESSSCLGKT…NDLLKILYPN (80 aa)) enclose the BRCT domain.

Belongs to the NAD-dependent DNA ligase family. LigA subfamily. Requires Mg(2+) as cofactor. It depends on Mn(2+) as a cofactor.

It catalyses the reaction NAD(+) + (deoxyribonucleotide)n-3'-hydroxyl + 5'-phospho-(deoxyribonucleotide)m = (deoxyribonucleotide)n+m + AMP + beta-nicotinamide D-nucleotide.. DNA ligase that catalyzes the formation of phosphodiester linkages between 5'-phosphoryl and 3'-hydroxyl groups in double-stranded DNA using NAD as a coenzyme and as the energy source for the reaction. It is essential for DNA replication and repair of damaged DNA. This Chlamydia caviae (strain ATCC VR-813 / DSM 19441 / 03DC25 / GPIC) (Chlamydophila caviae) protein is DNA ligase.